Here is a 469-residue protein sequence, read N- to C-terminus: Ubiquitin carboxyl-terminal hydrolase MINDY-1 (469 aa).

The interval M1–L85 is disordered. Residues H34–A53 show a composition bias toward basic and acidic residues. S103 is modified (phosphoserine). Residue C137 is the Nucleophile of the active site. H319 serves as the catalytic Proton acceptor. The ubiquitin-binding domain (UBD) stretch occupies residues Q388–Q426. Residues Q428 to L469 are disordered. A Phosphoserine modification is found at S441. Residues A453 to L469 show a composition bias toward basic and acidic residues.

Belongs to the MINDY deubiquitinase family. FAM63 subfamily.

The catalysed reaction is Thiol-dependent hydrolysis of ester, thioester, amide, peptide and isopeptide bonds formed by the C-terminal Gly of ubiquitin (a 76-residue protein attached to proteins as an intracellular targeting signal).. Its function is as follows. Hydrolase that can specifically remove 'Lys-48'-linked conjugated ubiquitin from proteins. Has exodeubiquitinase activity and has a preference for long polyubiquitin chains. May play a regulatory role at the level of protein turnover. This Pongo abelii (Sumatran orangutan) protein is Ubiquitin carboxyl-terminal hydrolase MINDY-1 (MINDY1).